Here is a 402-residue protein sequence, read N- to C-terminus: B3 domain-containing protein Os01g0723500 (402 aa).

The segment at residues Arg-18–Thr-121 is a DNA-binding region (TF-B3 1). A disordered region spans residues Glu-126 to Leu-203. Basic and acidic residues predominate over residues Asp-152–Gly-162. Residues Ser-173–Thr-186 are compositionally biased toward polar residues. A DNA-binding region (TF-B3 2) is located at residues Cys-289–Val-381.

It is found in the nucleus. This chain is B3 domain-containing protein Os01g0723500, found in Oryza sativa subsp. japonica (Rice).